A 134-amino-acid chain; its full sequence is Methylmalonyl-CoA decarboxylase subunit gamma (134 aa).

A compositionally biased stretch (low complexity) spans 28–38 (APAARPAAAPA). Residues 28–67 (APAARPAAAPAPAAPKPAAAPAPAPAPKTTAAGAGAGANT) form a disordered region. A compositionally biased stretch (pro residues) spans 39 to 53 (PAAPKPAAAPAPAPA). The span at 54–67 (PKTTAAGAGAGANT) shows a compositional bias: low complexity. One can recognise a Biotinyl-binding domain in the interval 58–134 (AAGAGAGANT…NAGDILVVLS (77 aa)). N6-biotinyllysine is present on lysine 100.

The methylmalonyl-CoA decarboxylase is composed of four subunits: the carboxyltransferase alpha subunit (MmdA), the tunnel beta subunit (MmdB), the biotin-containing gamma subunit (MmdC) and the delta subunit (MmdD). The cofactor is biotin.

The protein localises to the cell membrane. It catalyses the reaction (S)-methylmalonyl-CoA + Na(+)(in) + H(+)(out) = propanoyl-CoA + Na(+)(out) + CO2. Functionally, biotin-containing subunit of the sodium ion pump methylmalonyl-CoA decarboxylase, which converts the chemical energy of a decarboxylation reaction into an electrochemical gradient of Na(+) ions across the cytoplasmic membrane, thereby creating a sodium ion motive force that is used for ATP synthesis. This Propionigenium modestum protein is Methylmalonyl-CoA decarboxylase subunit gamma.